A 1380-amino-acid polypeptide reads, in one-letter code: DNA-directed RNA polymerase subunit beta (1380 aa).

The protein belongs to the RNA polymerase beta chain family. The RNAP catalytic core consists of 2 alpha, 1 beta, 1 beta' and 1 omega subunit. When a sigma factor is associated with the core the holoenzyme is formed, which can initiate transcription.

The catalysed reaction is RNA(n) + a ribonucleoside 5'-triphosphate = RNA(n+1) + diphosphate. Functionally, DNA-dependent RNA polymerase catalyzes the transcription of DNA into RNA using the four ribonucleoside triphosphates as substrates. The sequence is that of DNA-directed RNA polymerase subunit beta from Rhizobium rhizogenes (strain K84 / ATCC BAA-868) (Agrobacterium radiobacter).